The chain runs to 506 residues: Histidine ammonia-lyase (506 aa).

The segment at residues 143-145 is a cross-link (5-imidazolinone (Ala-Gly)); it reads ASG. Ser144 is subject to 2,3-didehydroalanine (Ser).

This sequence belongs to the PAL/histidase family. In terms of processing, contains an active site 4-methylidene-imidazol-5-one (MIO), which is formed autocatalytically by cyclization and dehydration of residues Ala-Ser-Gly.

The protein resides in the cytoplasm. It carries out the reaction L-histidine = trans-urocanate + NH4(+). It participates in amino-acid degradation; L-histidine degradation into L-glutamate; N-formimidoyl-L-glutamate from L-histidine: step 1/3. The protein is Histidine ammonia-lyase of Salmonella schwarzengrund (strain CVM19633).